A 274-amino-acid chain; its full sequence is Hematopoietically-expressed homeobox protein hhex (274 aa).

Positions 139–198 (RKGGQVRFSNDQTIELEKKFETQKYLSPPERKRLAKMLQLSERQVKTWFQNRRAKWRRLK) form a DNA-binding region, homeobox. The disordered stretch occupies residues 197–274 (LKQENPQGNK…GDKGFYNCAH (78 aa)). The span at 237–248 (DEPTSSPTSQET) shows a compositional bias: polar residues. The span at 249-263 (LDSEVSDDSDQEVDI) shows a compositional bias: acidic residues.

Expressed in the most dorsoanterior endomesoderm of the blastula and gastrula embryo, and later is restricted to the forming liver diverticulum.

It localises to the nucleus. Functionally, recognizes the DNA sequence 5'-ATTAA-3'. Transcriptional repressor. Regulates the differentiation of both endothelial and blood cells. Probably plays a role in the proliferation of vascular endothelial cells during blood vessel development. Establishes anterior identity at two levels; acts early to enhance canonical wnt-signaling by repressing expression of tle4, and acts later to inhibit nodal-signaling by directly targeting nodal/nr1 and nodal2/nr2. May play a role in liver development. Induces heart development. The protein is Hematopoietically-expressed homeobox protein hhex of Xenopus tropicalis (Western clawed frog).